A 415-amino-acid chain; its full sequence is Packaging protein 3 (415 aa).

Disordered stretches follow at residues 1–56 and 66–85; these read MHPV…RRRA and EGLARLGAPSPERHPRVQLK. The interaction with packaging protein 1 stretch occupies residues 1–173; the sequence is MHPVLRQMRP…VNQEINFQKS (173 aa). Residues 31–46 are compositionally biased toward low complexity; that stretch reads PTASGGATSAADAAAD. S75 is subject to Phosphoserine; by host. Over residues 76–85 the composition is skewed to basic and acidic residues; that stretch reads PERHPRVQLK. S360 is subject to Phosphoserine; by host. Residues 381 to 394 show a composition bias toward low complexity; the sequence is GAGPGLAVAPARAG. Residues 381 to 415 are disordered; the sequence is GAGPGLAVAPARAGNVGGVEEYDEDDEYEPEDGEY. Over residues 400-415 the composition is skewed to acidic residues; the sequence is EEYDEDDEYEPEDGEY.

The protein belongs to the adenoviridae packaging protein 3 family. Part of the genome packaging complex composed of packaging proteins 1, 2 and 3; this complex specifically binds to the packaging sequence on the left end of viral genomic DNA and performs packaging of the viral genome. Interacts with hexon-linking protein IIIa; this interaction is required to promote correct genome packaging. Post-translationally, cleaved at different sites by the viral protease during virion maturation.

It localises to the host nucleus. Functionally, involved in viral genome packaging through its interaction with packaging proteins 1 and 2. After proteolytic cleavage by adenovirus protease, L1 52/55k protein is removed from the capsid during viral maturation. This chain is Packaging protein 3, found in Human adenovirus C serotype 2 (HAdV-2).